The following is a 444-amino-acid chain: Vacuolar protein sorting-associated protein 4B (444 aa).

Residues 4 to 82 (TNTNLQKAID…KEYLKKKEKK (79 aa)) enclose the MIT domain. Residues 19–82 (AQEDKAGNYE…KEYLKKKEKK (64 aa)) adopt a coiled-coil conformation. A disordered region spans residues 77 to 118 (KKKEKKPQKPVKEEQSGPVDEKGNDSDGEAESDDPEKKKLQN). Over residues 86-101 (PVKEEQSGPVDEKGND) the composition is skewed to basic and acidic residues. Phosphoserine is present on residues Ser-102 and Ser-108. 174–181 (GPPGTGKS) contacts ATP. Ser-410 is modified (phosphoserine).

Belongs to the AAA ATPase family. As to quaternary structure, proposed to be monomeric or homodimeric in nucleotide-free form and to oligomerize upon binding to ATP to form two stacked hexameric or heptameric rings with a central pore through which ESCRT-III substrates are translocated in an ATP-dependent manner. In vitro, associates on the inside of a helical tubular structure formed by a CHMP2A-CHMP3 polymer. Interacts with CHMP1A, CHMP1B, CHMP4B and CHMP6. Interacts with CHMP2A. Interacts with VPS4A; the interaction suggests a heteromeric assembly with VPS4A. Interacts with VTA1. In terms of tissue distribution, high level expression seen in the kidney. It is also expressed in the heart, brain, spleen, lung, liver, skeletal muscle, and testis.

It is found in the late endosome membrane. The catalysed reaction is ATP + H2O = ADP + phosphate + H(+). Its function is as follows. Involved in late steps of the endosomal multivesicular bodies (MVB) pathway. Recognizes membrane-associated ESCRT-III assemblies and catalyzes their disassembly, possibly in combination with membrane fission. Redistributes the ESCRT-III components to the cytoplasm for further rounds of MVB sorting. MVBs contain intraluminal vesicles (ILVs) that are generated by invagination and scission from the limiting membrane of the endosome and mostly are delivered to lysosomes enabling degradation of membrane proteins, such as stimulated growth factor receptors, lysosomal enzymes and lipids. VPS4A/B are required for the exosomal release of SDCBP, CD63 and syndecan. Functionally, (Microbial infection) In conjunction with the ESCRT machinery also appears to function in topologically equivalent membrane fission events, such as the terminal stages of cytokinesis and enveloped virus budding (lentiviruses). The protein is Vacuolar protein sorting-associated protein 4B of Mus musculus (Mouse).